The following is a 448-amino-acid chain: N-succinylarginine dihydrolase (448 aa).

Residues Ala19–Ser28, Asn110, and His137–Arg138 contribute to the substrate site. Glu174 is a catalytic residue. Arg214 contributes to the substrate binding site. His250 is an active-site residue. Substrate is bound by residues Asp252 and Asn364. Cys370 acts as the Nucleophile in catalysis.

The protein belongs to the succinylarginine dihydrolase family. As to quaternary structure, homodimer.

It carries out the reaction N(2)-succinyl-L-arginine + 2 H2O + 2 H(+) = N(2)-succinyl-L-ornithine + 2 NH4(+) + CO2. It participates in amino-acid degradation; L-arginine degradation via AST pathway; L-glutamate and succinate from L-arginine: step 2/5. Catalyzes the hydrolysis of N(2)-succinylarginine into N(2)-succinylornithine, ammonia and CO(2). This chain is N-succinylarginine dihydrolase, found in Pseudoalteromonas translucida (strain TAC 125).